A 383-amino-acid chain; its full sequence is Acetylornithine deacetylase (383 aa).

Zn(2+) is bound at residue histidine 80. The active site involves aspartate 82. Aspartate 112 is a binding site for Zn(2+). Residue glutamate 144 is part of the active site. Zn(2+) contacts are provided by glutamate 145, glutamate 169, and histidine 355.

The protein belongs to the peptidase M20A family. ArgE subfamily. As to quaternary structure, homodimer. Zn(2+) serves as cofactor. The cofactor is Co(2+). Requires glutathione as cofactor.

It is found in the cytoplasm. It catalyses the reaction N(2)-acetyl-L-ornithine + H2O = L-ornithine + acetate. It participates in amino-acid biosynthesis; L-arginine biosynthesis; L-ornithine from N(2)-acetyl-L-ornithine (linear): step 1/1. Catalyzes the hydrolysis of the amide bond of N(2)-acetylated L-amino acids. Cleaves the acetyl group from N-acetyl-L-ornithine to form L-ornithine, an intermediate in L-arginine biosynthesis pathway, and a branchpoint in the synthesis of polyamines. This chain is Acetylornithine deacetylase, found in Klebsiella pneumoniae (strain 342).